Here is an 81-residue protein sequence, read N- to C-terminus: U12-hexatoxin-Mg1a (81 aa).

An N-terminal signal peptide occupies residues 1-24 (MKAPATIVILIMSLISVLWATADT). Residues 25–50 (EDGNLLFPIEDFIRKFDEYPVQPKER) constitute a propeptide that is removed on maturation. Disulfide bonds link Cys52-Cys66, Cys59-Cys71, and Cys65-Cys75. The residue at position 78 (Pro78) is a Proline amide.

As to expression, expressed by the venom gland.

The protein resides in the secreted. Functionally, blocks voltage-gated sodium channels (Nav). Intracranial injection into mice causes lacrimation, slow breathing and death. Intrathorax injection into crickets causes death. This chain is U12-hexatoxin-Mg1a, found in Macrothele gigas (Japanese funnel web spider).